Consider the following 623-residue polypeptide: Kelch repeat and BTB domain-containing protein 12 (623 aa).

The 68-residue stretch at 31–98 (IDVVLTAEGE…MYNAALEINN (68 aa)) folds into the BTB domain. The 103-residue stretch at 133-235 (CLGIYYFAKQ…NPSFLRQALR (103 aa)) folds into the BACK domain. Kelch repeat units lie at residues 386-436 (DLYV…TVNN), 437-492 (KLYV…VVNS), 494-547 (IYVL…STNA), and 553-603 (KLYV…LVAR).

This is Kelch repeat and BTB domain-containing protein 12 (KBTBD12) from Homo sapiens (Human).